The primary structure comprises 237 residues: Cytosolic-abundant heat soluble protein 1 (237 aa).

Composition is skewed to basic and acidic residues over residues 1–17 (MPYE…KTEQ) and 91–105 (VDMR…EARR). Disordered stretches follow at residues 1 to 35 (MPYE…VARE) and 85 to 105 (SGAS…EARR). Residues 98-201 (KLAEEARRDA…KEALERSRMA (104 aa)) adopt a coiled-coil conformation. CAHS motif regions lie at residues 132–150 (YRHQ…LEKQ) and 169–187 (QKRE…LDRE). The segment at 212-237 (AGHTVSGGTTVSSVDKVETVRERKHH) is disordered. Basic and acidic residues predominate over residues 226 to 237 (DKVETVRERKHH).

It belongs to the Cytosolic-abundant heat soluble protein (CAHS) family.

The protein localises to the cytoplasm. The protein resides in the nucleus. In terms of biological role, CAHS proteins are cytosolic heat soluble proteins that seem to contribute to the anhydrobiosis in tardigrades, but their specific mechanisms are yet to be identified. It is possible that protection during anhydrobiosis might occur via the stabilization of vitrifying small molecules such as sugars, but not via the direct glass transition of CAHS proteins themselves. The protein is Cytosolic-abundant heat soluble protein 1 of Ramazzottius varieornatus (Water bear).